Here is a 549-residue protein sequence, read N- to C-terminus: DDB1- and CUL4-associated factor 11 (549 aa).

Residues 1-24 (MGSRNSSSAGSGSLEPSEGLSRRG) are compositionally biased toward low complexity. Positions 1-40 (MGSRNSSSAGSGSLEPSEGLSRRGTGLRRSEEEEEEDEDV) are disordered. A phosphoserine mark is found at Ser-73 and Ser-75. 7 WD repeats span residues 170 to 210 (TYSQ…HKFK), 216 to 258 (DVGW…TALD), 263 to 302 (ERRFAVFSIAVSSDGREVLGGANDGCLYVFDREQNRRTLQ), 305 to 345 (SHED…EDDP), 353 to 392 (GHQDGITFIDSKGDARYLISNSKDQTIKLWDIRRFSSREG), 435 to 480 (GVLH…KKLT), and 481 to 520 (NHKACVRDVSWHPFEEKIVSSSWDGNLRLWQYRQAEYFQD).

In terms of assembly, interacts with DDB1 and CUL4A.

It participates in protein modification; protein ubiquitination. Its function is as follows. May function as a substrate receptor for CUL4-DDB1 E3 ubiquitin-protein ligase complex. The chain is DDB1- and CUL4-associated factor 11 (Dcaf11) from Mus musculus (Mouse).